Here is a 315-residue protein sequence, read N- to C-terminus: MSQLDALREMTVVVADTGDIEAIKQYQPQDATTNPSLILNASALPQYASLIDDAVAYAKAKSDDKAQQLIDAEDKLAVNIGLEILKIVPGRISTEVDARLSYDTEATIEKARQIMKLYNDAGISNDRILIKIASTWQGIRAAEVLEKEGINCNLTLLFSQAQARACAEAGVYLISPFVGRILDWYKAAEKKEYAPAEDPGVISVTNIYNYYKQYGYQTVVMGASFRNVGEITEIAGCDRLTIAPPLLKELAESNAPLVRKLEYKGEVKARPAPLTEAEFYWQHNQDPMAVEKLAEGIRKFAVDIEKLEAMLAAKL.

The active-site Schiff-base intermediate with substrate is Lys131.

The protein belongs to the transaldolase family. Type 1 subfamily. As to quaternary structure, homodimer.

It is found in the cytoplasm. The enzyme catalyses D-sedoheptulose 7-phosphate + D-glyceraldehyde 3-phosphate = D-erythrose 4-phosphate + beta-D-fructose 6-phosphate. It participates in carbohydrate degradation; pentose phosphate pathway; D-glyceraldehyde 3-phosphate and beta-D-fructose 6-phosphate from D-ribose 5-phosphate and D-xylulose 5-phosphate (non-oxidative stage): step 2/3. In terms of biological role, transaldolase is important for the balance of metabolites in the pentose-phosphate pathway. The polypeptide is Transaldolase (Actinobacillus pleuropneumoniae serotype 3 (strain JL03)).